A 306-amino-acid polypeptide reads, in one-letter code: Small ribosomal subunit protein uS2 (306 aa).

The residue at position 2 (Ser2) is an N-acetylserine. 2 laminin-binding regions span residues Ile161–Arg180 and Arg205–Gly229. 5 [DE]-W-[ST] repeats span residues Glu230–Thr232, Asp245–Ser247, Asp276–Ser278, Asp286–Ser288, and Glu304–Ser306. Residues Glu242–Ser306 are laminin-binding. The segment at Ser247–Ser306 is disordered. Residues Asp276 to Ser306 show a composition bias toward polar residues.

Belongs to the universal ribosomal protein uS2 family. In terms of assembly, monomer (37LRP) and homodimer (67LR). Component of the small ribosomal subunit. Mature ribosomes consist of a small (40S) and a large (60S) subunit. The 40S subunit contains about 33 different proteins and 1 molecule of RNA (18S). The 60S subunit contains about 49 different proteins and 3 molecules of RNA (28S, 5.8S and 5S). Interacts with rps21. Interacts with several laminins including at least lamb1. Interacts with mdk. Acylated. Acylation may be a prerequisite for conversion of the monomeric 37 kDa laminin receptor precursor (37LRP) to the mature dimeric 67 kDa laminin receptor (67LR), and may provide a mechanism for membrane association. In terms of processing, cleaved by stromelysin-3 (ST3) at the cell surface. Cleavage by stromelysin-3 may be a mechanism to alter cell-extracellular matrix interactions.

It localises to the cell membrane. The protein resides in the cytoplasm. It is found in the nucleus. In terms of biological role, required for the assembly and/or stability of the 40S ribosomal subunit. Required for the processing of the 20S rRNA-precursor to mature 18S rRNA in a late step of the maturation of 40S ribosomal subunits. Also functions as a cell surface receptor for laminin. Plays a role in cell adhesion to the basement membrane and in the consequent activation of signaling transduction pathways. May play a role in cell fate determination and tissue morphogenesis. In Xenopus laevis (African clawed frog), this protein is Small ribosomal subunit protein uS2 (rpsa).